Consider the following 370-residue polypeptide: Chloromuconate cycloisomerase (370 aa).

Lys165 serves as the catalytic Proton acceptor. Positions 194, 220, and 245 each coordinate Mn(2+). Glu323 acts as the Proton donor in catalysis.

The protein belongs to the mandelate racemase/muconate lactonizing enzyme family. Requires Mn(2+) as cofactor.

The catalysed reaction is 2-[(2R)-2-chloro-2,5-dihydro-5-oxofuryl]acetate = 3-chloro-cis,cis-muconate + H(+). It functions in the pathway aromatic compound metabolism; 3-chlorocatechol degradation. In terms of biological role, highly active toward chlorinated substrates but retains diminished activity toward the non-chlorinated substrates. This Pseudomonas putida (Arthrobacter siderocapsulatus) protein is Chloromuconate cycloisomerase (clcB).